Consider the following 380-residue polypeptide: G-protein coupled receptor (380 aa).

Transmembrane regions (helical) follow at residues 26–46, 60–80, 97–117, 145–165, 184–204, 220–240, and 275–295; these read VISI…YLGI, LVCC…PLWV, FAGM…VIVT, VTIL…ETSI, AALG…HIIL, ILMW…SLSA, and VAML…VPLI. The cysteines at positions 95 and 170 are disulfide-linked. The interval 328–380 is disordered; that stretch reads SQSKLLRGEENPNYDYSPKSVRIKPLKSPGGGDNSSLKDEGYDEESQNGFSIG.

Belongs to the G-protein coupled receptor 1 family.

It localises to the host membrane. The sequence is that of G-protein coupled receptor from Elephas maximus (Indian elephant).